We begin with the raw amino-acid sequence, 185 residues long: HTH-type transcriptional repressor OpcR (185 aa).

A DNA-binding region (H-T-H motif) is located at residues 49-73; that stretch reads LSELSEATGMSKTRMSQVVREMIDA.

Belongs to the GbsR family.

Is not choline-responsive. Negatively regulates the transcription of the opuC operon. In the absence of GbsR, is also a negative regulator of the opuB operon. Binds to an inverted repeat in the promoter region of the operons. This chain is HTH-type transcriptional repressor OpcR (opcR), found in Bacillus subtilis (strain 168).